Here is a 169-residue protein sequence, read N- to C-terminus: UPF0398 protein Spy49_1277c (169 aa).

The protein belongs to the UPF0398 family.

The sequence is that of UPF0398 protein Spy49_1277c from Streptococcus pyogenes serotype M49 (strain NZ131).